Reading from the N-terminus, the 216-residue chain is Leucyl/phenylalanyl-tRNA--protein transferase (216 aa).

It belongs to the L/F-transferase family.

The protein localises to the cytoplasm. The enzyme catalyses N-terminal L-lysyl-[protein] + L-leucyl-tRNA(Leu) = N-terminal L-leucyl-L-lysyl-[protein] + tRNA(Leu) + H(+). It catalyses the reaction N-terminal L-arginyl-[protein] + L-leucyl-tRNA(Leu) = N-terminal L-leucyl-L-arginyl-[protein] + tRNA(Leu) + H(+). The catalysed reaction is L-phenylalanyl-tRNA(Phe) + an N-terminal L-alpha-aminoacyl-[protein] = an N-terminal L-phenylalanyl-L-alpha-aminoacyl-[protein] + tRNA(Phe). Its function is as follows. Functions in the N-end rule pathway of protein degradation where it conjugates Leu, Phe and, less efficiently, Met from aminoacyl-tRNAs to the N-termini of proteins containing an N-terminal arginine or lysine. The polypeptide is Leucyl/phenylalanyl-tRNA--protein transferase (Maricaulis maris (strain MCS10) (Caulobacter maris)).